The chain runs to 703 residues: DNA ligase (703 aa).

Positions 1–20 (MNDNLDLFSGAAPAAPESGA) are disordered. The segment covering 9–20 (SGAAPAAPESGA) has biased composition (low complexity). NAD(+) is bound by residues 53 to 57 (DGEYD), 102 to 103 (SI), and Glu139. The active-site N6-AMP-lysine intermediate is Lys141. 4 residues coordinate NAD(+): Arg162, Glu200, Lys321, and Lys345. Positions 439, 442, 457, and 463 each coordinate Zn(2+). The BRCT domain maps to 622–703 (QTAQPLAGMT…MLALLAGGDR (82 aa)).

This sequence belongs to the NAD-dependent DNA ligase family. LigA subfamily. Mg(2+) serves as cofactor. It depends on Mn(2+) as a cofactor.

It carries out the reaction NAD(+) + (deoxyribonucleotide)n-3'-hydroxyl + 5'-phospho-(deoxyribonucleotide)m = (deoxyribonucleotide)n+m + AMP + beta-nicotinamide D-nucleotide.. Functionally, DNA ligase that catalyzes the formation of phosphodiester linkages between 5'-phosphoryl and 3'-hydroxyl groups in double-stranded DNA using NAD as a coenzyme and as the energy source for the reaction. It is essential for DNA replication and repair of damaged DNA. In Delftia acidovorans (strain DSM 14801 / SPH-1), this protein is DNA ligase.